Consider the following 1047-residue polypeptide: Exportin-6 (1047 aa).

The Importin N-terminal domain occupies 32–98 (IDTILNNYKA…KGLLLDIYLN (67 aa)).

The protein belongs to the exportin family.

The protein localises to the nucleus. The protein resides in the cytoplasm. Probably mediates the nuclear export of actin and profilin-actin complexes. The protein is Exportin-6 (xpo6) of Dictyostelium discoideum (Social amoeba).